A 350-amino-acid chain; its full sequence is D-alanine--D-alanine ligase (350 aa).

In terms of domain architecture, ATP-grasp spans 135 to 335; sequence KLYAKNLGVK…LAQSLPKTPK (201 aa). 164 to 219 contacts ATP; sequence KPSFNFPFIVKPNNAGSSLGVSVVKEEKELAYALDGAFEYSKEVLIEPFIQRVKEY. Mg(2+) is bound by residues D291, E303, and N305.

The protein belongs to the D-alanine--D-alanine ligase family. Mg(2+) serves as cofactor. Mn(2+) is required as a cofactor.

The protein localises to the cytoplasm. The enzyme catalyses 2 D-alanine + ATP = D-alanyl-D-alanine + ADP + phosphate + H(+). It functions in the pathway cell wall biogenesis; peptidoglycan biosynthesis. Cell wall formation. This is D-alanine--D-alanine ligase from Helicobacter acinonychis (strain Sheeba).